A 317-amino-acid polypeptide reads, in one-letter code: Fruit protein pKIWI502 (317 aa).

Positions 1–29 (MSITLSRPSLSRPSLSRHPSLTLHSSLSH) are disordered. The 112-residue stretch at 71 to 182 (YIWTPVPISR…TQIIGRGFDI (112 aa)) folds into the FAD-binding FR-type domain.

This is Fruit protein pKIWI502 from Actinidia deliciosa (Kiwi).